A 35-amino-acid chain; its full sequence is Photosystem II reaction center protein T (35 aa).

The helical transmembrane segment at 3-23 threads the bilayer; the sequence is ALVYTFLLVSTLGIIFFAIFF.

This sequence belongs to the PsbT family. PSII is composed of 1 copy each of membrane proteins PsbA, PsbB, PsbC, PsbD, PsbE, PsbF, PsbH, PsbI, PsbJ, PsbK, PsbL, PsbM, PsbT, PsbY, PsbZ, Psb30/Ycf12, at least 3 peripheral proteins of the oxygen-evolving complex and a large number of cofactors. It forms dimeric complexes.

Its subcellular location is the plastid. The protein resides in the chloroplast thylakoid membrane. Found at the monomer-monomer interface of the photosystem II (PS II) dimer, plays a role in assembly and dimerization of PSII. PSII is a light-driven water plastoquinone oxidoreductase, using light energy to abstract electrons from H(2)O, generating a proton gradient subsequently used for ATP formation. The chain is Photosystem II reaction center protein T from Taxus brevifolia (Pacific yew).